The sequence spans 149 residues: UPF0260 protein PFLU_1520 (149 aa).

The protein belongs to the UPF0260 family.

The protein is UPF0260 protein PFLU_1520 of Pseudomonas fluorescens (strain SBW25).